We begin with the raw amino-acid sequence, 181 residues long: ATP-dependent protease subunit HslV (181 aa).

Residue threonine 7 is part of the active site. Na(+) is bound by residues alanine 166, cysteine 169, and threonine 172.

The protein belongs to the peptidase T1B family. HslV subfamily. A double ring-shaped homohexamer of HslV is capped on each side by a ring-shaped HslU homohexamer. The assembly of the HslU/HslV complex is dependent on binding of ATP.

It localises to the cytoplasm. The catalysed reaction is ATP-dependent cleavage of peptide bonds with broad specificity.. Allosterically activated by HslU binding. Protease subunit of a proteasome-like degradation complex believed to be a general protein degrading machinery. The chain is ATP-dependent protease subunit HslV from Anaeromyxobacter dehalogenans (strain 2CP-1 / ATCC BAA-258).